We begin with the raw amino-acid sequence, 95 residues long: Small ribosomal subunit protein bS20 (95 aa).

Belongs to the bacterial ribosomal protein bS20 family.

Functionally, binds directly to 16S ribosomal RNA. The chain is Small ribosomal subunit protein bS20 from Fervidobacterium nodosum (strain ATCC 35602 / DSM 5306 / Rt17-B1).